A 257-amino-acid chain; its full sequence is Phycoerythrobilin:ferredoxin oxidoreductase (257 aa).

Belongs to the HY2 family.

The catalysed reaction is (3Z)-phycoerythrobilin + oxidized 2[4Fe-4S]-[ferredoxin] = 15,16-dihydrobiliverdin + reduced 2[4Fe-4S]-[ferredoxin] + 2 H(+). Catalyzes the two-electron reduction of the C2 and C3(1) diene system of 15,16-dihydrobiliverdin. The sequence is that of Phycoerythrobilin:ferredoxin oxidoreductase from Synechococcus sp. (strain CC9902).